The following is a 180-amino-acid chain: CDP-archaeol synthase (180 aa).

Helical transmembrane passes span 5 to 25 (LVAT…AAVL), 54 to 74 (AVGT…AEPA), 78 to 98 (LGVD…FGAM), 118 to 138 (AFPG…VFVV), and 142 to 162 (WALA…TPIL).

Belongs to the CDP-archaeol synthase family. Mg(2+) is required as a cofactor.

It localises to the cell membrane. The enzyme catalyses 2,3-bis-O-(geranylgeranyl)-sn-glycerol 1-phosphate + CTP + H(+) = CDP-2,3-bis-O-(geranylgeranyl)-sn-glycerol + diphosphate. Its pathway is membrane lipid metabolism; glycerophospholipid metabolism. Its function is as follows. Catalyzes the formation of CDP-2,3-bis-(O-geranylgeranyl)-sn-glycerol (CDP-archaeol) from 2,3-bis-(O-geranylgeranyl)-sn-glycerol 1-phosphate (DGGGP) and CTP. This reaction is the third ether-bond-formation step in the biosynthesis of archaeal membrane lipids. The protein is CDP-archaeol synthase of Halorubrum lacusprofundi (strain ATCC 49239 / DSM 5036 / JCM 8891 / ACAM 34).